A 223-amino-acid chain; its full sequence is Alpha-enolase (223 aa).

Serine 8 is a binding site for Mg(2+). Phosphotyrosine is present on tyrosine 12. Lysine 25 bears the N6-acetyllysine mark. Position 39 (glutamate 39) interacts with substrate. The residue at position 61 (lysine 61) is an N6-acetyllysine. Glutamate 69 acts as the Proton donor in catalysis. Lysine 87 bears the N6-acetyllysine; alternate mark. Lysine 87 carries the N6-malonyllysine; alternate modification. Residue lysine 87 is modified to N6-succinyllysine; alternate. Residues aspartate 99 and aspartate 119 each contribute to the Mg(2+) site. Substrate is bound at residue aspartate 119. N6-acetyllysine occurs at positions 133 and 141. The active-site Proton acceptor is the lysine 141. Substrate contacts are provided by residues 168 to 171 (SHRS) and lysine 192. Residues 202–223 (YNQILRIEEELGSKSFRNPLAK) are required for interaction with PLG. Residue lysine 215 is modified to N6-acetyllysine; alternate. Position 215 is an N6-malonyllysine; alternate (lysine 215). Lysine 215 carries the N6-succinyllysine; alternate modification.

This sequence belongs to the enolase family. Mammalian enolase is composed of 3 isozyme subunits, alpha, beta and gamma, which can form homodimers or heterodimers which are cell-type and development-specific. ENO1 interacts with PLG in the neuronal plasma membrane and promotes its activation. The C-terminal lysine is required for this binding. Interacts with ENO4 and PGAM2. Interacts with CMTM6. Mg(2+) is required as a cofactor. ISGylated. In terms of processing, lysine 2-hydroxyisobutyrylation (Khib) by p300/EP300 activates the phosphopyruvate hydratase activity.

It localises to the cytoplasm. The protein localises to the cell membrane. The enzyme catalyses (2R)-2-phosphoglycerate = phosphoenolpyruvate + H2O. It functions in the pathway carbohydrate degradation; glycolysis; pyruvate from D-glyceraldehyde 3-phosphate: step 4/5. Its function is as follows. Glycolytic enzyme the catalyzes the conversion of 2-phosphoglycerate to phosphoenolpyruvate. In addition to glycolysis, involved in various processes such as growth control, hypoxia tolerance and allergic responses. May also function in the intravascular and pericellular fibrinolytic system due to its ability to serve as a receptor and activator of plasminogen on the cell surface of several cell-types such as leukocytes and neurons. Stimulates immunoglobulin production. The chain is Alpha-enolase from Mesocricetus auratus (Golden hamster).